The sequence spans 559 residues: Myb/SANT-like DNA-binding domain-containing protein 2 (559 aa).

Residues 1-62 (MAAPCGSELP…GSAAGSGAAA (62 aa)) form a disordered region. 5 positions are modified to phosphoserine: serine 13, serine 24, serine 27, serine 32, and serine 48. Over residues 46–61 (GASPLGPGSAAGSGAA) the composition is skewed to low complexity. The region spanning 103-173 (SWTPAETNAL…QCRERIKTLR (71 aa)) is the Myb-like domain. Glycyl lysine isopeptide (Lys-Gly) (interchain with G-Cter in SUMO2) cross-links involve residues lysine 268 and lysine 343. Serine 436 carries the post-translational modification Phosphoserine.

The sequence is that of Myb/SANT-like DNA-binding domain-containing protein 2 (Msantd2) from Mus musculus (Mouse).